The primary structure comprises 476 residues: Bifunctional protein HldE (476 aa).

The interval 1 to 319 (MKVSLPAFEK…EALALHHGES (319 aa)) is ribokinase. ATP is bound at residue 195–198 (NMSE). Aspartate 264 is an active-site residue. The interval 345-476 (MTNGCFDILH…AIIQNIMAKQ (132 aa)) is cytidylyltransferase.

In the N-terminal section; belongs to the carbohydrate kinase PfkB family. It in the C-terminal section; belongs to the cytidylyltransferase family. In terms of assembly, homodimer.

The enzyme catalyses D-glycero-beta-D-manno-heptose 7-phosphate + ATP = D-glycero-beta-D-manno-heptose 1,7-bisphosphate + ADP + H(+). It carries out the reaction D-glycero-beta-D-manno-heptose 1-phosphate + ATP + H(+) = ADP-D-glycero-beta-D-manno-heptose + diphosphate. Its pathway is nucleotide-sugar biosynthesis; ADP-L-glycero-beta-D-manno-heptose biosynthesis; ADP-L-glycero-beta-D-manno-heptose from D-glycero-beta-D-manno-heptose 7-phosphate: step 1/4. It participates in nucleotide-sugar biosynthesis; ADP-L-glycero-beta-D-manno-heptose biosynthesis; ADP-L-glycero-beta-D-manno-heptose from D-glycero-beta-D-manno-heptose 7-phosphate: step 3/4. In terms of biological role, catalyzes the phosphorylation of D-glycero-D-manno-heptose 7-phosphate at the C-1 position to selectively form D-glycero-beta-D-manno-heptose-1,7-bisphosphate. Its function is as follows. Catalyzes the ADP transfer from ATP to D-glycero-beta-D-manno-heptose 1-phosphate, yielding ADP-D-glycero-beta-D-manno-heptose. In Shewanella sp. (strain ANA-3), this protein is Bifunctional protein HldE.